We begin with the raw amino-acid sequence, 44 residues long: Antimicrobial peptide 1b (44 aa).

Residues 1 to 42 (AQKCGEQGRGAKCPNCLCCGRYGFCGSTPDYCGVGCQSQCRG) form the Chitin-binding type-1 domain. 5 cysteine pairs are disulfide-bonded: cysteine 4/cysteine 19, cysteine 13/cysteine 25, cysteine 16/cysteine 43, cysteine 18/cysteine 32, and cysteine 36/cysteine 40.

In terms of processing, contains 5 disulfide bonds.

Functionally, binds chitin. Has antifungal activity against F.oxysporum 16/10 (IC(50)=4.1 uM) and B.sorokiniana 6/10 (IC(50)=2.7 uM). Inhibits germination of fungal spores. In Leymus arenarius (Lyme grass), this protein is Antimicrobial peptide 1b.